We begin with the raw amino-acid sequence, 106 residues long: Large ribosomal subunit protein uL24 (106 aa).

This sequence belongs to the universal ribosomal protein uL24 family. Part of the 50S ribosomal subunit.

Its function is as follows. One of two assembly initiator proteins, it binds directly to the 5'-end of the 23S rRNA, where it nucleates assembly of the 50S subunit. Functionally, one of the proteins that surrounds the polypeptide exit tunnel on the outside of the subunit. This Albidiferax ferrireducens (strain ATCC BAA-621 / DSM 15236 / T118) (Rhodoferax ferrireducens) protein is Large ribosomal subunit protein uL24.